Consider the following 552-residue polypeptide: Transcription factor kayak (552 aa).

Disordered regions lie at residues 110–145 and 177–234; these read LAQGSDSEDSNASYNDTQMNEEQDTTDTSSAHTDST and GAAS…KRRV. Residues 111–127 show a composition bias toward polar residues; the sequence is AQGSDSEDSNASYNDTQ. Over residues 135 to 145 the composition is skewed to low complexity; the sequence is TDTSSAHTDST. The segment covering 177-192 has biased composition (polar residues); it reads GAASVGSSNANTSNTP. Residues 212-275 enclose the bZIP domain; it reads EQKRAVRRER…NQLEYCLAAH (64 aa). The tract at residues 214 to 233 is basic motif; the sequence is KRAVRRERNKQAAARCRKRR. Residues 240-247 form a leucine-zipper region; it reads LTEEVEQL. Residues 304-325 are compositionally biased toward low complexity; sequence AGSSGSGASSHHNHNSNDSSNG. 3 disordered regions span residues 304-346, 365-390, and 514-552; these read AGSS…PLDL, LDGAIDSGSSLDQDGPPPSKRITLPP, and GGTGLTPVSGPLVPNSSSANKHPLELPTPTAEPSKLVSL. Residues 333–343 show a composition bias toward polar residues; sequence TLNSTGRSNSP. The residue at position 342 (serine 342) is a Phosphoserine.

Belongs to the bZIP family. Fos subfamily. In terms of assembly, homodimer. Heterodimer with Jra. The kay-Jra heterodimer binds more stably to the AP-1 site than either of the two proteins alone.

The protein resides in the nucleus. Functionally, developmentally regulated transcription factor AP-1 binds and recognizes the enhancer DNA sequence: 5'-TGA[CG]TCA-3'. May play a role in the function or determination of a particular subset of cells in the developing embryo. It is able to carry out its function either independently of or in conjunction with Jra. This chain is Transcription factor kayak, found in Drosophila yakuba (Fruit fly).